The primary structure comprises 342 residues: Probable deoxyhypusine synthase (342 aa).

The active-site Nucleophile is the Lys-307.

The protein belongs to the deoxyhypusine synthase family. It depends on NAD(+) as a cofactor.

The catalysed reaction is [eIF5A protein]-L-lysine + spermidine = [eIF5A protein]-deoxyhypusine + propane-1,3-diamine. It functions in the pathway protein modification; eIF5A hypusination. Functionally, catalyzes the NAD-dependent oxidative cleavage of spermidine and the subsequent transfer of the butylamine moiety of spermidine to the epsilon-amino group of a specific lysine residue of the eIF-5A precursor protein to form the intermediate deoxyhypusine residue. This chain is Probable deoxyhypusine synthase (dys), found in Pyrococcus horikoshii (strain ATCC 700860 / DSM 12428 / JCM 9974 / NBRC 100139 / OT-3).